A 224-amino-acid polypeptide reads, in one-letter code: Deoxyribose-phosphate aldolase (224 aa).

Residue Asp-92 is the Proton donor/acceptor of the active site. Catalysis depends on Lys-154, which acts as the Schiff-base intermediate with acetaldehyde. Lys-183 serves as the catalytic Proton donor/acceptor.

Belongs to the DeoC/FbaB aldolase family. DeoC type 1 subfamily.

The protein localises to the cytoplasm. It carries out the reaction 2-deoxy-D-ribose 5-phosphate = D-glyceraldehyde 3-phosphate + acetaldehyde. It functions in the pathway carbohydrate degradation; 2-deoxy-D-ribose 1-phosphate degradation; D-glyceraldehyde 3-phosphate and acetaldehyde from 2-deoxy-alpha-D-ribose 1-phosphate: step 2/2. Its function is as follows. Catalyzes a reversible aldol reaction between acetaldehyde and D-glyceraldehyde 3-phosphate to generate 2-deoxy-D-ribose 5-phosphate. The polypeptide is Deoxyribose-phosphate aldolase (Actinobacillus succinogenes (strain ATCC 55618 / DSM 22257 / CCUG 43843 / 130Z)).